A 178-amino-acid polypeptide reads, in one-letter code: Orotate phosphoribosyltransferase (178 aa).

Residues arginine 92, lysine 93, lysine 96, and 118–126 (EDVTTTGGS) contribute to the 5-phospho-alpha-D-ribose 1-diphosphate site. Threonine 122 and arginine 150 together coordinate orotate.

Belongs to the purine/pyrimidine phosphoribosyltransferase family. PyrE subfamily. In terms of assembly, homodimer. Mg(2+) serves as cofactor.

The catalysed reaction is orotidine 5'-phosphate + diphosphate = orotate + 5-phospho-alpha-D-ribose 1-diphosphate. It participates in pyrimidine metabolism; UMP biosynthesis via de novo pathway; UMP from orotate: step 1/2. In terms of biological role, catalyzes the transfer of a ribosyl phosphate group from 5-phosphoribose 1-diphosphate to orotate, leading to the formation of orotidine monophosphate (OMP). The protein is Orotate phosphoribosyltransferase of Methanosphaera stadtmanae (strain ATCC 43021 / DSM 3091 / JCM 11832 / MCB-3).